The sequence spans 572 residues: Methionine--tRNA ligase (572 aa).

The 'HIGH' region signature appears at 11-21 (PYINGIKHLGN). 4 residues coordinate Zn(2+): Cys-143, Cys-146, Cys-156, and Cys-159. The 'KMSKS' region motif lies at 346–350 (QFSTS). An ATP-binding site is contributed by Thr-349.

Belongs to the class-I aminoacyl-tRNA synthetase family. MetG type 1 subfamily. Monomer. Requires Zn(2+) as cofactor.

The protein resides in the cytoplasm. It carries out the reaction tRNA(Met) + L-methionine + ATP = L-methionyl-tRNA(Met) + AMP + diphosphate. Functionally, is required not only for elongation of protein synthesis but also for the initiation of all mRNA translation through initiator tRNA(fMet) aminoacylation. The sequence is that of Methionine--tRNA ligase from Ruegeria pomeroyi (strain ATCC 700808 / DSM 15171 / DSS-3) (Silicibacter pomeroyi).